The primary structure comprises 517 residues: MDVDEGQDMSQVSGKESPPVSDTPDEGDEPMPVPEDLSTTSGAQQNSKSDRGMGSNVKVETQSDEENGRACEMNGEECAEDLRMLDASGEKMNGSHRDQGSSALSGVGGIRLPNGKLKCDICGIVCIGPNVLMVHKRSHTERPFQCNQCGASFTQKGNLLRHIKLHSGEKPFKCHLCNYACRRRDALTGHLRTHSVGKPHKCGYCGRSYKQRSSLEEHKERCHNYLESMGLPGVCPVIKEETNHNEMAEDLCKIGAERSLVLDRLASNVAKRKSSMPQKFLGDKCLSDMPYDSANYEKEDMMTSHVMDQAINNAINYLGAESLRPLVQTPPGSSEVVPVISSMYQLHKPPSDGPPRSNHSAQDAVDNLLLLSKAKSVSSEREASPSNSCQDSTDTESNAEEQRSGLIYLTNHINPHARNGLALKEEQRAYEVLRAASENSQDAFRVVSTSGEQLKVYKCEHCRVLFLDHVMYTIHMGCHGCHGFRDPFECNMCGYHSQDRYEFSSHITRGEHRYHLS.

Residues 1 to 71 (MDVDEGQDMS…QSDEENGRAC (71 aa)) are disordered. At S13 the chain carries Phosphoserine. T23 carries the post-translational modification Phosphothreonine. Residues 37-47 (LSTTSGAQQNS) show a composition bias toward polar residues. K58 is covalently cross-linked (Glycyl lysine isopeptide (Lys-Gly) (interchain with G-Cter in SUMO)). Residues S63 and S101 each carry the phosphoserine modification. A C2H2-type 1 zinc finger spans residues 117 to 139 (LKCDICGIVCIGPNVLMVHKRSH). T140 is subject to Phosphothreonine. The C2H2-type 2 zinc-finger motif lies at 144–166 (FQCNQCGASFTQKGNLLRHIKLH). The segment at 153 to 162 (FTQKGNLLRH) is required for both high-affinity DNA binding and pericentromeric heterochromatin localization. Phosphoserine is present on S167. The segment at 172 to 194 (FKCHLCNYACRRRDALTGHLRTH) adopts a C2H2-type 3 zinc-finger fold. Positions 179 to 194 (YACRRRDALTGHLRTH) are required for both high-affinity DNA binding and pericentromeric heterochromatin localization. Phosphoserine is present on S195. The C2H2-type 4 zinc finger occupies 200-223 (HKCGYCGRSYKQRSSLEEHKERCH). K239 participates in a covalent cross-link: Glycyl lysine isopeptide (Lys-Gly) (interchain with G-Cter in SUMO). 9 positions are modified to phosphoserine: S259, S287, S293, S357, S360, S384, S386, S388, and S392. The interval 376-400 (SVSSEREASPSNSCQDSTDTESNAE) is disordered. T393 is modified (phosphothreonine). Residues S397 and S440 each carry the phosphoserine modification. 2 consecutive C2H2-type zinc fingers follow at residues 457-479 (YKCEHCRVLFLDHVMYTIHMGCH) and 488-512 (FECNMCGYHSQDRYEFSSHITRGEH). Residues 463 to 466 (RVLF) are required for binding PP1CC.

This sequence belongs to the Ikaros C2H2-type zinc-finger protein family. In terms of assembly, heterodimer with other IKAROS family members. Interacts with IKZF4 and IKZF5. Component of the chromatin-remodeling NuRD repressor complex which includes at least HDAC1, HDAC2, RBBP4, RBBP7, IKZF1, MTA2, MBD2, MBD3, MTA1L1, CHD3 and CHD4. Interacts directly with the CHD4 component of the NuRD complex. Interacts directly with SMARCA4; the interaction associates IKFZ1 with the BAF complex. Interacts with SUMO1; the interaction sumoylates IKAROS, promoted by PIAS2 and PIAS3. Interacts with PIAS2 (isoform alpha); the interaction promotes sumoylation and reduces transcription repression. Interacts, to a lesser extent, with PIAS3. Interacts with PPP1CC; the interaction targets PPP1CC to pericentromeric heterochromatin, dephosphorylates IKAROS, stabilizes it and prevents it from degradation. Interacts with IKZF3. Phosphorylation at Ser-357 and Ser-360 downstream of SYK induces nuclear translocation. Phosphorylation controls cell-cycle progression from late G(1) stage to S stage. Hyperphosphorylated during G2/M phase. Dephosphorylated state during late G(1) phase. Phosphorylation on Thr-140 is required for DNA and pericentromeric location during mitosis. CK2 is the main kinase, in vitro. GSK3 and CDK may also contribute to phosphorylation of the C-terminal serine and threonine residues. Phosphorylation on these C-terminal residues reduces the DNA-binding ability. Phosphorylation/dephosphorylation events on Ser-13 and Ser-293 regulate TDT expression during thymocyte differentiation. Dephosphorylation by protein phosphatase 1 regulates stability and pericentromeric heterochromatin location. Phosphorylated in both lymphoid and non-lymphoid tissues. In terms of processing, sumoylated. Simultaneous sumoylation on the 2 sites results in a loss of both HDAC-dependent and HDAC-independent repression. Has no effect on pericentromeric heterochromatin location. Desumoylated by SENP1. Post-translationally, polyubiquitinated. As to expression, strongly expressed in T-cells and their progenitors,in B-cells, and in all early embryonic retinal progenitor cells (RPCs). Isoforms V and VI are the predominant isoforms in lymphocytes.

Its subcellular location is the nucleus. The protein resides in the cytoplasm. In terms of biological role, transcription regulator of hematopoietic cell differentiation. Binds gamma-satellite DNA. Binds with higher affinity to gamma satellite A. Plays a role in the development of lymphocytes, B- and T-cells. Binds and activates the enhancer (delta-A element) of the CD3-delta gene. Repressor of the TDT (terminal deoxynucleotidyltransferase) gene during thymocyte differentiation. Regulates transcription through association with both HDAC-dependent and HDAC-independent complexes. Targets the 2 chromatin-remodeling complexes, NuRD and BAF (SWI/SNF), in a single complex (PYR complex), to the beta-globin locus in adult erythrocytes. Increases normal apoptosis in adult erythroid cells. Confers early temporal competence to retinal progenitor cells (RPCs). Function is isoform-specific and is modulated by dominant-negative inactive isoforms. The chain is DNA-binding protein Ikaros (Ikzf1) from Mus musculus (Mouse).